Consider the following 351-residue polypeptide: Ferrochelatase (351 aa).

Residues histidine 220 and glutamate 301 each contribute to the Fe cation site.

The protein belongs to the ferrochelatase family.

The protein resides in the cytoplasm. The catalysed reaction is heme b + 2 H(+) = protoporphyrin IX + Fe(2+). Its pathway is porphyrin-containing compound metabolism; protoheme biosynthesis; protoheme from protoporphyrin-IX: step 1/1. Catalyzes the ferrous insertion into protoporphyrin IX. The polypeptide is Ferrochelatase (Rhodobacter capsulatus (Rhodopseudomonas capsulata)).